Consider the following 117-residue polypeptide: Small ribosomal subunit protein bS6 (117 aa).

Belongs to the bacterial ribosomal protein bS6 family.

Its function is as follows. Binds together with bS18 to 16S ribosomal RNA. The chain is Small ribosomal subunit protein bS6 from Roseobacter denitrificans (strain ATCC 33942 / OCh 114) (Erythrobacter sp. (strain OCh 114)).